Here is a 100-residue protein sequence, read N- to C-terminus: Large ribosomal subunit protein bL27 (100 aa).

Residues 1-9 (MLKMNLQLF) constitute a propeptide that is removed on maturation.

This sequence belongs to the bacterial ribosomal protein bL27 family. Post-translationally, the N-terminus is cleaved by ribosomal processing cysteine protease Prp.

This is Large ribosomal subunit protein bL27 from Clostridium perfringens (strain ATCC 13124 / DSM 756 / JCM 1290 / NCIMB 6125 / NCTC 8237 / Type A).